Consider the following 501-residue polypeptide: Cytochrome P450 monooxygenase esdpH (501 aa).

A helical transmembrane segment spans residues 5–22 (RVGILIIGVLATATFWLC). Position 446 (C446) interacts with heme.

This sequence belongs to the cytochrome P450 family. Requires heme as cofactor.

The protein localises to the membrane. It functions in the pathway secondary metabolite biosynthesis; terpenoid biosynthesis. Functionally, cytochrome P450 monooxygenase; part of the cluster that mediates the biosynthesis of shearones, diterpenoid pyrones (DPs) which are structurally diverse meroterpenoids consisting of a diterpene linked by a pyrone, and which may exhibit a range of bioactivities. Whitin the pathway, esdpH takes part in the molecular scaffold modification via the hydroxylation at C-6' and can transform shearone C into shearone E, shearone D into shearone F, and shearone H into shearone I, the latter being the final product of the pathway. The molecular scaffold is commonly biosynthesized by a series of enzymes including the non-reducing polyketide synthase (NR-PKS) esdpA that generates an alpha-pyrone; the prenyltransferase esdpC that attaches a geranylgeranyl pyrophosphate (GGPP) produced by the GGPP synthase (GGPPS) esdpD onto the pyrone unit; the FAD-dependent monooxygenase esdpE that converts an olefin on the diterpene unit into an epoxide; and the terpene cyclase esdpB that catalyzes the cyclization reactions to give the molecular backbone shearone A. In the modification steps, esdpF oxidizes the hydroxy group to a ketone at C-3 and esdpG then attaches hydroxy groups at both C-11 and C-12. After that, esdpI hydroxylates at C-20 and esdpH hydroxylates at C-6'. The ether bridge is generated by nucleophilic attack of the hydroxy group at C-20 to the carbonyl carbon at C-3. EsdpH can also functions prior to esdpI. The different combinations of these modification enzymes lead to the production of diverse shearone derivatives, shearone I being the end product of the pathway. The alpha-ketoglutarate-dependent dioxygenase esdpJ seems not to be involved in this pathway. In Penicillium shearii (Eupenicillium shearii), this protein is Cytochrome P450 monooxygenase esdpH.